The following is a 428-amino-acid chain: G2/mitotic-specific cyclin-1 (428 aa).

The disordered stretch occupies residues 1 to 22 (MKFSEEKNVSNNPTNFEGGLDS).

The protein belongs to the cyclin family. Cyclin AB subfamily. As to quaternary structure, interacts with the CDC2 protein kinase to form a serine/threonine kinase holoenzyme complex also known as maturation promoting factor (MPF). The cyclin subunit imparts substrate specificity to the complex.

In terms of biological role, essential for the control of the cell cycle at the G2/M (mitosis) transition. This chain is G2/mitotic-specific cyclin-1, found in Medicago sativa subsp. varia (Alfalfa).